The sequence spans 351 residues: UDP-N-acetylenolpyruvoylglucosamine reductase (351 aa).

The 172-residue stretch at 25 to 196 (HIQAQARWLL…TAVEFRLPLL (172 aa)) folds into the FAD-binding PCMH-type domain. Arginine 173 is an active-site residue. Serine 246 serves as the catalytic Proton donor. The active site involves glutamate 343.

Belongs to the MurB family. The cofactor is FAD.

The protein localises to the cytoplasm. The catalysed reaction is UDP-N-acetyl-alpha-D-muramate + NADP(+) = UDP-N-acetyl-3-O-(1-carboxyvinyl)-alpha-D-glucosamine + NADPH + H(+). It participates in cell wall biogenesis; peptidoglycan biosynthesis. Functionally, cell wall formation. The protein is UDP-N-acetylenolpyruvoylglucosamine reductase of Xylella fastidiosa (strain M23).